A 961-amino-acid polypeptide reads, in one-letter code: Rho guanine nucleotide exchange factor 2 (961 aa).

The segment at 12–59 adopts a Phorbol-ester/DAG-type zinc-finger fold; that stretch reads GHLFTTISVSGMTMCYACNKSITAKEALICPTCNVTIHNRCKDTLANC. Residues Ser82, Ser95, Ser102, Ser106, Ser110, Ser124, Ser136, Ser145, Ser147, and Ser150 each carry the phosphoserine modification. The tract at residues 104 to 134 is interaction with DYNLT1; that stretch reads RQSLLGSRRGRSPLSLAKSVSTTNIAGHFND. The DH domain maps to 209–406; sequence KQQDVIYELI…KELLSNVDQD (198 aa). Lys327 is modified (N6-acetyllysine). One can recognise a PH domain in the interval 446-545; sequence KLIHDGCLLW…WIRVIQQSVR (100 aa). Positions 561 to 588 form a coiled coil; it reads EAYLRRIKMELQQKDRALVELLQEKVGL. Ser619 and Ser622 each carry phosphoserine. Thr653 carries the phosphothreonine; by MAPK1 or MAPK3 modification. The segment at 659-679 is disordered; sequence LPVETDSGGNTSPGVTANGEA. A phosphoserine mark is found at Ser665, Ser670, Ser685, and Ser756. Positions 742–761 are enriched in basic and acidic residues; sequence PEGPERREKLTRANSRDGEA. The segment at 742–770 is disordered; it reads PEGPERREKLTRANSRDGEAGRAGAAPVA. The stretch at 772–841 forms a coiled coil; that stretch reads EKQATELALL…RQLAALGHTE (70 aa). At Ser860 the chain carries Phosphoserine; by PAK1 and AURKA. A disordered region spans residues 867–961; sequence LYLSFTPPQP…RDGEPVASES (95 aa). Tyr868 bears the Phosphotyrosine mark. Ser870 is modified (phosphoserine; by PAK4). Residues 894-913 are compositionally biased toward basic and acidic residues; the sequence is RPFEDRERQELGSPDERLQD. Ser906, Ser914, and Ser915 each carry phosphoserine. A compositionally biased stretch (acidic residues) spans 915 to 925; sequence SDPDTGSEEEG. Thr919 bears the Phosphothreonine mark. Residues Ser921, Ser927, Ser928, and Ser931 each carry the phosphoserine modification. Ser935 is modified (phosphoserine; by CDK1).

As to quaternary structure, found in a complex composed at least of ARHGEF2, NOD2 and RIPK2. Interacts with RIPK2; the interaction mediates tyrosine phosphorylation of RIPK2 by Src kinase CSK. Interacts with RIPK1 and RIPK3. Interacts with YWHAZ/14-3-3 zeta; when phosphorylated at Ser-860. Interacts with the kinases PAK4, AURKA and MAPK1. Interacts with RHOA and RAC1. Interacts with NOD1. Interacts (via the N- terminal zinc finger) with CAPN6 (via domain II). Interacts with DYNLT1. In terms of processing, phosphorylation of Ser-860 by PAK1 induces binding to protein YWHAZ, promoting its relocation to microtubules and the inhibition of its activity. Phosphorylated by AURKA and CDK1 during mitosis, which negatively regulates its activity. Phosphorylation by MAPK1 or MAPK3 increases nucleotide exchange activity. Phosphorylation by PAK4 releases GEF-H1 from the microtubules. Phosphorylated on serine, threonine and tyrosine residues in a RIPK2-dependent manner.

It is found in the cytoplasm. It localises to the cytoskeleton. The protein localises to the cell junction. Its subcellular location is the tight junction. The protein resides in the golgi apparatus. It is found in the spindle. It localises to the cytoplasmic vesicle. Activates Rho-GTPases by promoting the exchange of GDP for GTP. May be involved in epithelial barrier permeability, cell motility and polarization, dendritic spine morphology, antigen presentation, leukemic cell differentiation, cell cycle regulation, innate immune response, and cancer. Binds Rac-GTPases, but does not seem to promote nucleotide exchange activity toward Rac-GTPases. May stimulate instead the cortical activity of Rac. Inactive toward CDC42, TC10, or Ras-GTPases. Forms an intracellular sensing system along with NOD1 for the detection of microbial effectors during cell invasion by pathogens. Involved in innate immune signaling transduction pathway promoting cytokine IL6/interleukin-6 and TNF-alpha secretion in macrophage upon stimulation by bacterial peptidoglycans; acts as a signaling intermediate between NOD2 receptor and RIPK2 kinase. Contributes to the tyrosine phosphorylation of RIPK2 through Src tyrosine kinase leading to NF-kappaB activation by NOD2. Overexpression activates Rho-, but not Rac-GTPases, and increases paracellular permeability. Involved in neuronal progenitor cell division and differentiation. Involved in the migration of precerebellar neurons. This is Rho guanine nucleotide exchange factor 2 (ARHGEF2) from Sus scrofa (Pig).